A 1368-amino-acid chain; its full sequence is DNA-directed RNA polymerase subunit beta (1368 aa).

It belongs to the RNA polymerase beta chain family. In terms of assembly, the RNAP catalytic core consists of 2 alpha, 1 beta, 1 beta' and 1 omega subunit. When a sigma factor is associated with the core the holoenzyme is formed, which can initiate transcription.

It carries out the reaction RNA(n) + a ribonucleoside 5'-triphosphate = RNA(n+1) + diphosphate. In terms of biological role, DNA-dependent RNA polymerase catalyzes the transcription of DNA into RNA using the four ribonucleoside triphosphates as substrates. The sequence is that of DNA-directed RNA polymerase subunit beta from Ralstonia pickettii (strain 12J).